We begin with the raw amino-acid sequence, 460 residues long: Phosphoglucomutase (460 aa).

The Phosphoserine intermediate role is filled by Ser103. Ser103 serves as a coordination point for Mg(2+). Substrate-binding positions include 103 to 104 and Lys113; that span reads SH. Residues Asp239, Asp241, and Asp243 each contribute to the Mg(2+) site. Substrate is bound by residues 243–244, Thr303, and 322–324; these read DR and EMS.

This sequence belongs to the phosphohexose mutase family. Mg(2+) serves as cofactor.

It localises to the cytoplasm. The enzyme catalyses alpha-D-glucose 1-phosphate = alpha-D-glucose 6-phosphate. Its function is as follows. This enzyme participates in both the breakdown and synthesis of glucose. The polypeptide is Phosphoglucomutase (pgm) (Neisseria meningitidis serogroup A / serotype 4A (strain DSM 15465 / Z2491)).